The following is a 339-amino-acid chain: D-erythrose-4-phosphate dehydrogenase (339 aa).

Residue 11-12 (RI) participates in NAD(+) binding. Residues 158 to 160 (SCT), Arg204, 217 to 218 (TK), and Arg240 contribute to the substrate site. Cys159 serves as the catalytic Nucleophile. Position 322 (Asn322) interacts with NAD(+).

It belongs to the glyceraldehyde-3-phosphate dehydrogenase family. Epd subfamily. As to quaternary structure, homotetramer.

The protein resides in the cytoplasm. The catalysed reaction is D-erythrose 4-phosphate + NAD(+) + H2O = 4-phospho-D-erythronate + NADH + 2 H(+). The protein operates within cofactor biosynthesis; pyridoxine 5'-phosphate biosynthesis; pyridoxine 5'-phosphate from D-erythrose 4-phosphate: step 1/5. In terms of biological role, catalyzes the NAD-dependent conversion of D-erythrose 4-phosphate to 4-phosphoerythronate. In Aliivibrio fischeri (strain ATCC 700601 / ES114) (Vibrio fischeri), this protein is D-erythrose-4-phosphate dehydrogenase.